The primary structure comprises 96 residues: Large ribosomal subunit protein uL23 (96 aa).

Belongs to the universal ribosomal protein uL23 family. Part of the 50S ribosomal subunit. Contacts protein L29, and trigger factor when it is bound to the ribosome.

Its function is as follows. One of the early assembly proteins it binds 23S rRNA. One of the proteins that surrounds the polypeptide exit tunnel on the outside of the ribosome. Forms the main docking site for trigger factor binding to the ribosome. The polypeptide is Large ribosomal subunit protein uL23 (Bacillus mycoides (strain KBAB4) (Bacillus weihenstephanensis)).